The chain runs to 565 residues: Frizzled-2 (565 aa).

A signal peptide spans M1 to A23. Residues Q24–W247 are Extracellular-facing. The FZ domain maps to P34–Q153. Cystine bridges form between C39/C100, C47/C93, C84/C121, C110/C150, and C114/C138. N-linked (GlcNAc...) asparagine glycosylation is present at N53. N-linked (GlcNAc...) asparagine glycosylation occurs at N154. The disordered stretch occupies residues A160–P189. Residues P174–A188 show a composition bias toward gly residues. Residues I248–V268 form a helical membrane-spanning segment. The Cytoplasmic segment spans residues D269–P279. The helical transmembrane segment at I280 to L300 threads the bilayer. At Q301 to C327 the chain is on the extracellular side. The chain crosses the membrane as a helical span at residues T328 to L348. Residues S349–Q370 are Cytoplasmic-facing. A helical membrane pass occupies residues Y371–G391. Residues Q392–G414 lie on the Extracellular side of the membrane. The chain crosses the membrane as a helical span at residues F415 to F435. Residues V436–R461 lie on the Cytoplasmic side of the membrane. Residues I462–Y482 form a helical membrane-spanning segment. Topologically, residues E483–T519 are extracellular. A helical transmembrane segment spans residues V520 to W540. The Cytoplasmic segment spans residues S541–V565. The Lys-Thr-X-X-X-Trp motif, mediates interaction with the PDZ domain of Dvl family members signature appears at K543 to W548. A PDZ-binding motif is present at residues T563–V565.

Belongs to the G-protein coupled receptor Fz/Smo family. As to quaternary structure, (Microbial infection) Interacts with C.difficile toxin TcdB; frizzled receptors constitute the major host receptors for TcdB in the colonic epithelium. Ubiquitinated by ZNRF3, leading to its degradation by the proteasome. As to expression, widely expressed. In the adult, mainly found in heart, placenta, skeletal muscle, lung, kidney, pancreas, prostate, testis, ovary and colon. In the fetus, expressed in brain, lung and kidney. Low levels in fetal liver.

It is found in the membrane. Its subcellular location is the cell membrane. Its function is as follows. Receptor for Wnt proteins. Most of frizzled receptors are coupled to the beta-catenin canonical signaling pathway, which leads to the activation of disheveled proteins, inhibition of GSK-3 kinase, nuclear accumulation of beta-catenin and activation of Wnt target genes. A second signaling pathway involving PKC and calcium fluxes has been seen for some family members, but it is not yet clear if it represents a distinct pathway or if it can be integrated in the canonical pathway, as PKC seems to be required for Wnt-mediated inactivation of GSK-3 kinase. Both pathways seem to involve interactions with G-proteins. May be involved in transduction and intercellular transmission of polarity information during tissue morphogenesis and/or in differentiated tissues. (Microbial infection) Acts as a receptor for C.difficile toxin TcdB in the colonic epithelium. TcdB occupies the binding site for Wnt-adducted palmitoleate in frizzled receptors and TcdB-binding prevents Wnt-binding and downstream Wnt signaling. The chain is Frizzled-2 (FZD2) from Homo sapiens (Human).